Consider the following 542-residue polypeptide: TNF receptor-associated factor 6 (542 aa).

Positions 1 to 374 (MSLLHCENSC…EAQQCNGIYI (374 aa)) are interaction with TAX1BP1. The RING-type; degenerate zinc finger occupies 71–110 (CPICLMALREAVQTPCGHRFCKACIIKSIRDAGHKCPVDN). K125 is covalently cross-linked (Glycyl lysine isopeptide (Lys-Gly) (interchain with G-Cter in SUMO); alternate). K125 is covalently cross-linked (Glycyl lysine isopeptide (Lys-Gly) (interchain with G-Cter in ubiquitin); alternate). A Glycyl lysine isopeptide (Lys-Gly) (interchain with G-Cter in SUMO) cross-link involves residue K143. TRAF-type zinc fingers lie at residues 151 to 203 (EHQA…EDKE) and 204 to 260 (IHEQ…NHLA). The stretch at 310–368 (SEVHNFQETIQQLEGRLVRQDHQIRELTAKMETQSMYVNELKRTIRTLEDKVAEIEAQQ) forms a coiled coil. A Glycyl lysine isopeptide (Lys-Gly) (interchain with G-Cter in ubiquitin) cross-link involves residue K339. The MATH domain maps to 370–519 (NGIYIWKIGN…DDTLLVRCEV (150 aa)). Positions 375 to 542 (WKIGNFGMHL…FQPRSTDSGI (168 aa)) are interaction with TANK. Residue K473 forms a Glycyl lysine isopeptide (Lys-Gly) (interchain with G-Cter in SUMO) linkage.

This sequence belongs to the TNF receptor-associated factor family. A subfamily. As to quaternary structure, homotrimer. Homooligomer. N-terminal region is dimeric while C-terminal region is trimeric; maybe providing a mode of oligomerization. Upon IL1B treatment, forms a complex with PELI1, IRAK1, IRAK4 and MYD88; this complex recruits MAP3K7/TAK1, TAB1 and TAB2 to mediate NF-kappa-B activation. Direct binding of SMAD6 to PELI1 prevents the complex formation and hence negatively regulates IL1R-TLR signaling and eventually NF-kappa-B-mediated gene expression. Binds to TNFRSF5/CD40 and TNFRSF11A/RANK. Associates with NGFR, TNFRSF17, IRAK2, IRAK3, RIPK2, MAP3K1, MAP3K5, MAP3K14, CSK, TRAF, TRAF-interacting protein TRIP and TNF receptor associated protein TDP2. Interacts with IL17R. Interacts with SQSTM1 bridging NTRK1 and NGFR. Forms a ternary complex with SQSTM1 and PRKCZ. Interacts with PELI2 and PELI3. Binds UBE2V1. Interacts with TAX1BP1; this interaction mediates deubiquitination of TRAF6 and inhibition of NF-kappa-B activation. Interacts with ZNF675. Interacts with ARRB1 and ARRB2. Interacts with MAP3K7 and TAB1/MAP3K7IP1; during IL-1 signaling. Interacts with UBE2N. Interacts with TGFBR1, HDAC1 and RANGAP1. Interacts with AKT1, AKT2 and AKT3. Interacts (via TRAF domains) with NUMBL (via C-terminal). Interacts with RBCK1. Interacts with LIMD1 (via LIM domains). Interacts with RSAD2/viperin. Interacts (via C-terminus) with EIF2AK2/PKR (via the kinase catalytic domain). Interacts with ZFAND5. Interacts with IL1RL1. Interacts with TRAFD1. Interacts with AJUBA. Interacts with MAVS/IPS1. Interacts (via TRAF domains) with DYNC2I2 (via WD domains). Interacts with IFIT3 (via N-terminus). Interacts with TICAM2. Interacts with CARD14. Interacts with CD40 and MAP3K8; the interaction is required for ERK activation. Interacts with TICAM1 and this interaction is enhanced in the presence of WDFY1. Interacts with TANK; this interaction increases in response to DNA damage. Interacts with USP10; this interaction increases in response to DNA damage. Interacts with ZC3H12A; this interaction increases in response to DNA damage and is stimulated by TANK. Interacts with WDFY3. Interacts with TRIM13. Interacts with GPS2. Interacts (via C-terminus) with SASH1. Interacts with LRRC19. Interacts with IL17RA and TRAF3IP2. Interacts with TOMM70. Interacts with AMBRA1; interaction is required to mediate 'Lys-63'-linked ubiquitination of ULK1. Interacts with CRBN; this interaction inhibits TLR4-mediated signaling by preventing TRAF6-mediated ubiquitination of ECSIT. Sumoylated on Lys-125, Lys-143 and Lys-473 with SUMO1. In terms of processing, polyubiquitinated on Lys-125 by TRAF3IP2; after cell stimulation with IL17A. Polyubiquitinated on Lys-125; after cell stimulation with IL1B or TGFB. This ligand-induced cell stimulation leads to dimerization/oligomerization of TRAF6 molecules, followed by auto-ubiquitination which involves UBE2N and UBE2V1 and leads to TRAF6 activation. This 'Lys-63' site-specific poly-ubiquitination appears to be associated with the activation of signaling molecules. Endogenous autoubiquitination occurs only for the cytoplasmic form. Deubiquitinated by USP10 in a TANK-dependent manner, leading to the negative regulation of NF-kappa-B signaling upon DNA damage. LRRC19 induces 'Lys-63' ubiquitination. Ubiquitinated at Lys-339 by the SCF(FBXL2) complex, leading to its degradation by the proteasome.

The protein resides in the cytoplasm. Its subcellular location is the cell cortex. It localises to the nucleus. It is found in the lipid droplet. The enzyme catalyses S-ubiquitinyl-[E2 ubiquitin-conjugating enzyme]-L-cysteine + [acceptor protein]-L-lysine = [E2 ubiquitin-conjugating enzyme]-L-cysteine + N(6)-ubiquitinyl-[acceptor protein]-L-lysine.. Its pathway is protein modification; protein ubiquitination. E3 ubiquitin ligase that, together with UBE2N and UBE2V1, mediates the synthesis of 'Lys-63'-linked-polyubiquitin chains conjugated to proteins, such as ECSIT, IKBKG, IRAK1, AKT1 and AKT2. Also mediates ubiquitination of free/unanchored polyubiquitin chain that leads to MAP3K7 activation. Leads to the activation of NF-kappa-B and JUN. Seems to also play a role in dendritic cells (DCs) maturation and/or activation. Represses c-Myb-mediated transactivation, in B-lymphocytes. Adapter protein that seems to play a role in signal transduction initiated via TNF receptor, IL-1 receptor and IL-17 receptor. Regulates osteoclast differentiation by mediating the activation of adapter protein complex 1 (AP-1) and NF-kappa-B, in response to RANK-L stimulation. Together with MAP3K8, mediates CD40 signals that activate ERK in B-cells and macrophages, and thus may play a role in the regulation of immunoglobulin production. Acts as a regulator of the JNK and NF-kappa-B signaling pathways by initiating assembly of heterotypic 'Lys-63'-/'Lys-48'-linked branched ubiquitin chains that are then recognized by TAB2: TRAF6 catalyzes initial 'Lys-63'-linked-polyubiquitin chains that are then branched via 'Lys-48'-linked polyubiquitin by HUWE1. 'Lys-63'-/'Lys-48'-linked branched ubiquitin chains protect 'Lys-63'-linkages from CYLD deubiquitination. Also participates in the TCR signaling by ubiquitinating LAT. This chain is TNF receptor-associated factor 6 (TRAF6), found in Bos taurus (Bovine).